A 255-amino-acid polypeptide reads, in one-letter code: tRNA (guanine-N(1)-)-methyltransferase (255 aa).

Residues glycine 117 and 137–142 (IGDYVL) each bind S-adenosyl-L-methionine.

This sequence belongs to the RNA methyltransferase TrmD family. Homodimer.

Its subcellular location is the cytoplasm. It catalyses the reaction guanosine(37) in tRNA + S-adenosyl-L-methionine = N(1)-methylguanosine(37) in tRNA + S-adenosyl-L-homocysteine + H(+). Its function is as follows. Specifically methylates guanosine-37 in various tRNAs. This Glaesserella parasuis serovar 5 (strain SH0165) (Haemophilus parasuis) protein is tRNA (guanine-N(1)-)-methyltransferase.